We begin with the raw amino-acid sequence, 331 residues long: MSIATEIIGVPETLDHFQSESFSPYHFFSSEQWAKFRADTPLTLTSDEVKRLRSMGDPIDLDEVRRIYLSLSRLLSAHVESSQLLFEQRNRFLSLSDVTKTPFVIGIAGSVAVGKSTTARILKELLGRWPSSPKVDLITTDGFLHPNAVLQREKLMQRKGFPESYDTAAILRFLSAIKAGRPDVQAPCYSHLVYDVLPDEYKIVDRPDILIFEGINVLQSRDLPADGKIVPMVSDFFDFSIYIDAAEDQIHNWYVTRFMRLRETAFRDPNSYFHRYASISDAEALEIAADLWTNINLKNLRQNILPTRPRADLILKKGKDHLIEQVALRKL.

109–116 (GSVAVGKS) is a binding site for ATP.

Belongs to the prokaryotic pantothenate kinase family.

It localises to the cytoplasm. The enzyme catalyses (R)-pantothenate + ATP = (R)-4'-phosphopantothenate + ADP + H(+). Its pathway is cofactor biosynthesis; coenzyme A biosynthesis; CoA from (R)-pantothenate: step 1/5. The protein is Pantothenate kinase of Rhizobium etli (strain CIAT 652).